We begin with the raw amino-acid sequence, 602 residues long: Elongation factor 4 (602 aa).

Positions 6–188 constitute a tr-type G domain; sequence RNVRNFSIIA…RITEVVPEPA (183 aa). Residues 18-23 and 135-138 each bind GTP; these read DHGKST and NKID.

The protein belongs to the TRAFAC class translation factor GTPase superfamily. Classic translation factor GTPase family. LepA subfamily.

It is found in the cell membrane. It carries out the reaction GTP + H2O = GDP + phosphate + H(+). Required for accurate and efficient protein synthesis under certain stress conditions. May act as a fidelity factor of the translation reaction, by catalyzing a one-codon backward translocation of tRNAs on improperly translocated ribosomes. Back-translocation proceeds from a post-translocation (POST) complex to a pre-translocation (PRE) complex, thus giving elongation factor G a second chance to translocate the tRNAs correctly. Binds to ribosomes in a GTP-dependent manner. The chain is Elongation factor 4 from Oceanobacillus iheyensis (strain DSM 14371 / CIP 107618 / JCM 11309 / KCTC 3954 / HTE831).